Reading from the N-terminus, the 396-residue chain is Elongation factor Tu 2 (396 aa).

Residues 10–206 form the tr-type G domain; the sequence is KPHVNIGTIG…AVDEYIPTPE (197 aa). Residues 19–26 form a G1 region; the sequence is GHVDHGKT. GTP is bound at residue 19–26; it reads GHVDHGKT. T26 serves as a coordination point for Mg(2+). A G2 region spans residues 60-64; it reads GITIN. The segment at 81–84 is G3; sequence DCPG. Residues 81 to 85 and 136 to 139 contribute to the GTP site; these read DCPGH and NKVD. Positions 136–139 are G4; sequence NKVD. The segment at 174–176 is G5; it reads SAL.

It belongs to the TRAFAC class translation factor GTPase superfamily. Classic translation factor GTPase family. EF-Tu/EF-1A subfamily. In terms of assembly, monomer.

The protein localises to the cytoplasm. The catalysed reaction is GTP + H2O = GDP + phosphate + H(+). GTP hydrolase that promotes the GTP-dependent binding of aminoacyl-tRNA to the A-site of ribosomes during protein biosynthesis. The sequence is that of Elongation factor Tu 2 from Hyphomonas neptunium (strain ATCC 15444).